A 425-amino-acid polypeptide reads, in one-letter code: UPF0597 protein VFMJ11_0655 (425 aa).

This sequence belongs to the UPF0597 family.

The sequence is that of UPF0597 protein VFMJ11_0655 from Aliivibrio fischeri (strain MJ11) (Vibrio fischeri).